Consider the following 363-residue polypeptide: Dihydroorotate dehydrogenase (quinone) (363 aa).

FMN-binding positions include 67–71 and threonine 91; that span reads AGFDK. Lysine 71 provides a ligand contact to substrate. Substrate is bound at residue 116 to 120; the sequence is NRMGF. Residues asparagine 156 and asparagine 189 each contribute to the FMN site. Position 189 (asparagine 189) interacts with substrate. Serine 192 (nucleophile) is an active-site residue. Position 194 (asparagine 194) interacts with substrate. The FMN site is built by lysine 231 and threonine 259. Residue 260 to 261 participates in substrate binding; the sequence is NT. FMN is bound by residues glycine 287, glycine 316, and 337–338; that span reads YT.

The protein belongs to the dihydroorotate dehydrogenase family. Type 2 subfamily. As to quaternary structure, monomer. It depends on FMN as a cofactor.

It is found in the cell membrane. The enzyme catalyses (S)-dihydroorotate + a quinone = orotate + a quinol. It functions in the pathway pyrimidine metabolism; UMP biosynthesis via de novo pathway; orotate from (S)-dihydroorotate (quinone route): step 1/1. Its function is as follows. Catalyzes the conversion of dihydroorotate to orotate with quinone as electron acceptor. This chain is Dihydroorotate dehydrogenase (quinone), found in Kocuria rhizophila (strain ATCC 9341 / DSM 348 / NBRC 103217 / DC2201).